Consider the following 258-residue polypeptide: Imidazole glycerol phosphate synthase subunit HisF (258 aa).

Catalysis depends on residues Asp11 and Asp130.

Belongs to the HisA/HisF family. In terms of assembly, heterodimer of HisH and HisF.

It localises to the cytoplasm. The enzyme catalyses 5-[(5-phospho-1-deoxy-D-ribulos-1-ylimino)methylamino]-1-(5-phospho-beta-D-ribosyl)imidazole-4-carboxamide + L-glutamine = D-erythro-1-(imidazol-4-yl)glycerol 3-phosphate + 5-amino-1-(5-phospho-beta-D-ribosyl)imidazole-4-carboxamide + L-glutamate + H(+). Its pathway is amino-acid biosynthesis; L-histidine biosynthesis; L-histidine from 5-phospho-alpha-D-ribose 1-diphosphate: step 5/9. IGPS catalyzes the conversion of PRFAR and glutamine to IGP, AICAR and glutamate. The HisF subunit catalyzes the cyclization activity that produces IGP and AICAR from PRFAR using the ammonia provided by the HisH subunit. In Salmonella agona (strain SL483), this protein is Imidazole glycerol phosphate synthase subunit HisF.